The primary structure comprises 399 residues: Ankyrin repeat domain-containing protein 65 (399 aa).

ANK repeat units lie at residues 40-69 (QGWG…SVEE), 73-102 (AGRT…PVGA), 106-135 (AGRT…SAAA), 139-168 (TGLT…PGPA), 176-205 (RGWT…GLDG), 207-231 (LLVA…RVDA), 235-264 (AGAT…DPGI), 268-297 (HGRS…EVDA), 301-330 (LGLT…QVDA), and 334-363 (LRKT…SPTL). Residues 377–399 (DLPQALPELGGGEKECEGIESTG) are disordered.

The protein is Ankyrin repeat domain-containing protein 65 (ANKRD65) of Homo sapiens (Human).